Reading from the N-terminus, the 319-residue chain is NADH-ubiquinone oxidoreductase chain 1 (319 aa).

8 helical membrane passes run L3 to F23, L74 to P94, I106 to A126, T149 to F169, A175 to A195, L226 to F246, L254 to V274, and F294 to G314.

The protein belongs to the complex I subunit 1 family.

It localises to the mitochondrion inner membrane. The enzyme catalyses a ubiquinone + NADH + 5 H(+)(in) = a ubiquinol + NAD(+) + 4 H(+)(out). Core subunit of the mitochondrial membrane respiratory chain NADH dehydrogenase (Complex I) that is believed to belong to the minimal assembly required for catalysis. Complex I functions in the transfer of electrons from NADH to the respiratory chain. The immediate electron acceptor for the enzyme is believed to be ubiquinone. The polypeptide is NADH-ubiquinone oxidoreductase chain 1 (MT-ND1) (Polypterus ornatipinnis (Ornate bichir)).